A 135-amino-acid polypeptide reads, in one-letter code: Large ribosomal subunit protein uL16c (135 aa).

This sequence belongs to the universal ribosomal protein uL16 family. Part of the 50S ribosomal subunit.

The protein localises to the plastid. Its subcellular location is the chloroplast. The polypeptide is Large ribosomal subunit protein uL16c (Oenothera argillicola (Appalachian evening primrose)).